A 1099-amino-acid polypeptide reads, in one-letter code: SLIT-ROBO Rho GTPase-activating protein 3 (1099 aa).

Residues 19–314 form the F-BAR domain; sequence AQIKEIRTQL…AVDNLDSRSD (296 aa). A coiled-coil region spans residues 352–392; it reads QTELLMRYHQLQSRLATLKIENEEVRKTLDATMQTLQDMLT. The interval 470–493 is disordered; the sequence is GERAECGTTRPPCLPPKPQKMRRP. The region spanning 506-694 is the Rho-GAP domain; the sequence is GSMEAFIKDS…TIIIHHEAIF (189 aa). Residues 744-803 enclose the SH3 domain; the sequence is VEQIEAIAKFDYVGRSPRELSFKKGASLLLYHRASEDWWEGRHNGVDGLIPHQYIVVQDM. The segment covering 809–820 has biased composition (polar residues); sequence DSLSQKADSEAS. The interval 809–846 is disordered; sequence DSLSQKADSEASSGPLLDDKASSKNDLQSPTEHISDYG. Ser-817, Ser-820, Ser-821, Ser-837, and Ser-858 each carry phosphoserine. The segment at 861-911 is disordered; sequence AAIPRRRSGGDTHSPPRGLGPSIDTPPRAAACPSSPHKIPLSRGRIESPEK. Residues 952-987 are a coiled coil; that stretch reads HKSLEAEALAEDIEKTMSTALHELRELERQNTVKQA. Phosphoserine is present on Ser-954. Disordered regions lie at residues 994–1014 and 1045–1099; these read TLEP…SPLH and ARLA…SGTM. Residues 1060-1074 are compositionally biased toward low complexity; it reads VRPVVQHRSSSSSSS. Residues 1089 to 1099 are compositionally biased toward polar residues; sequence PNSSSDKSGTM.

In terms of assembly, homodimer. Forms a heterooligomer with SRGAP1 and SRGAP2 through its F-BAR domain. Interacts with WASF1. Probably interacts with ROBO1. Interacts with FASLG.

In terms of biological role, GTPase-activating protein for RAC1 and perhaps CDC42, but not for RhoA small GTPase. May attenuate RAC1 signaling in neurons. This chain is SLIT-ROBO Rho GTPase-activating protein 3 (Srgap3), found in Mus musculus (Mouse).